The following is a 167-amino-acid chain: uncharacterized protein (167 aa).

Residues 1–21 are disordered; the sequence is MFDFSFPTPASAGTRMGPASC.

This is an uncharacterized protein from Homo sapiens (Human).